The primary structure comprises 687 residues: UvrABC system protein C (687 aa).

Residues Thr-16–Val-95 form the GIY-YIG domain. The region spanning Asp-208–Ile-243 is the UVR domain.

Belongs to the UvrC family. Interacts with UvrB in an incision complex.

Its subcellular location is the cytoplasm. Its function is as follows. The UvrABC repair system catalyzes the recognition and processing of DNA lesions. UvrC both incises the 5' and 3' sides of the lesion. The N-terminal half is responsible for the 3' incision and the C-terminal half is responsible for the 5' incision. This chain is UvrABC system protein C, found in Corynebacterium diphtheriae (strain ATCC 700971 / NCTC 13129 / Biotype gravis).